The following is a 565-amino-acid chain: 13S globulin seed storage protein 1 (565 aa).

Positions 1–20 are cleaved as a signal peptide; that stretch reads MSTKLILSFSLCLMVLSCSA. 2 disulfides stabilise this stretch: Cys-44-Cys-77 and Cys-120-Cys-384. The Cupin type-1 1 domain maps to 49 to 331; that stretch reads LTASEPSRRV…FRNVDQETIS (283 aa). Disordered stretches follow at residues 126–224, 271–301, and 356–376; these read SESE…IRDG, GQSKQSREDRRSQRQTREEGSDRQSRESDDD, and EYEEELQRERGDRKRGGSGRS. Basic and acidic residues-rich tracts occupy residues 137 to 224, 275 to 297, and 356 to 370; these read RDQR…IRDG, QSREDRRSQRQTREEGSDRQSRE, and EYEEELQRERGDRKR. The region spanning 390–539 is the Cupin type-1 2 domain; sequence QNVNRPSRAD…SYDISTKEAF (150 aa).

The protein belongs to the 11S seed storage protein (globulins) family. In terms of assembly, hexamer; each subunit is composed of an acidic and a basic chain derived from a single precursor and linked by a disulfide bond. In terms of tissue distribution, expressed only in immature seeds.

In terms of biological role, seed storage protein. This chain is 13S globulin seed storage protein 1 (FA02), found in Fagopyrum esculentum (Common buckwheat).